A 582-amino-acid polypeptide reads, in one-letter code: ATP-dependent lipid A-core flippase (582 aa).

5 helical membrane passes run 16-36 (LWPTIAPFKAGLIVAGVALIL), 64-84 (LMWMPLVVIGLMILRGITSYI), 153-173 (IIGLFIMMFYYSWQLSIILIV), 253-273 (PIIQLIASLALAFVLYAASFP), and 275-295 (VMDSLTAGTITVVFSSMIALM). In terms of domain architecture, ABC transmembrane type-1 spans 28–310 (IVAGVALILN…LTNVNAQFQR (283 aa)). The ABC transporter domain occupies 342–578 (VEFRNVTFTY…RGVYAQLHKM (237 aa)). Position 376-383 (376-383 (GRSGSGKS)) interacts with ATP.

The protein belongs to the ABC transporter superfamily. Lipid exporter (TC 3.A.1.106) family. In terms of assembly, homodimer.

The protein resides in the cell inner membrane. The catalysed reaction is ATP + H2O + lipid A-core oligosaccharideSide 1 = ADP + phosphate + lipid A-core oligosaccharideSide 2.. Involved in lipopolysaccharide (LPS) biosynthesis. Translocates lipid A-core from the inner to the outer leaflet of the inner membrane. Transmembrane domains (TMD) form a pore in the inner membrane and the ATP-binding domain (NBD) is responsible for energy generation. This is ATP-dependent lipid A-core flippase from Escherichia coli O6:K15:H31 (strain 536 / UPEC).